Here is a 295-residue protein sequence, read N- to C-terminus: WHI2-like protein P4H10.16c (295 aa).

It belongs to the WHI2 family.

Its subcellular location is the cytoplasm. It is found in the nucleus. This is WHI2-like protein P4H10.16c from Schizosaccharomyces pombe (strain 972 / ATCC 24843) (Fission yeast).